The following is a 164-amino-acid chain: Ribonuclease P protein component 2 (164 aa).

The protein belongs to the eukaryotic/archaeal RNase P protein component 2 family. In terms of assembly, consists of a catalytic RNA component and at least 4-5 protein subunits.

Its subcellular location is the cytoplasm. The enzyme catalyses Endonucleolytic cleavage of RNA, removing 5'-extranucleotides from tRNA precursor.. Functionally, part of ribonuclease P, a protein complex that generates mature tRNA molecules by cleaving their 5'-ends. This chain is Ribonuclease P protein component 2, found in Halobacterium salinarum (strain ATCC 29341 / DSM 671 / R1).